Reading from the N-terminus, the 317-residue chain is Putative 2-hydroxyacid dehydrogenase SAOUHSC_02577 (317 aa).

NAD(+)-binding positions include E155–I156, A234–R236, and D260. Residue R236 is part of the active site. Residue E265 is part of the active site. H283 (proton donor) is an active-site residue. H283 to N286 is a binding site for NAD(+).

Belongs to the D-isomer specific 2-hydroxyacid dehydrogenase family.

This chain is Putative 2-hydroxyacid dehydrogenase SAOUHSC_02577, found in Staphylococcus aureus (strain NCTC 8325 / PS 47).